A 424-amino-acid chain; its full sequence is UPF0229 protein PFL_5654 (424 aa).

Positions 85-108 are disordered; that stretch reads GEHIARPQGGGGGGGGRGKAGNSG. Positions 92–108 are enriched in gly residues; the sequence is QGGGGGGGGRGKAGNSG.

The protein belongs to the UPF0229 family.

The polypeptide is UPF0229 protein PFL_5654 (Pseudomonas fluorescens (strain ATCC BAA-477 / NRRL B-23932 / Pf-5)).